We begin with the raw amino-acid sequence, 202 residues long: Imidazole glycerol phosphate synthase subunit HisH (202 aa).

Residues 3–202 (RIVIIDYGLG…KILRNFVEMC (200 aa)) enclose the Glutamine amidotransferase type-1 domain. The Nucleophile role is filled by Cys79. Catalysis depends on residues His183 and Glu185.

As to quaternary structure, heterodimer of HisH and HisF.

It localises to the cytoplasm. It carries out the reaction 5-[(5-phospho-1-deoxy-D-ribulos-1-ylimino)methylamino]-1-(5-phospho-beta-D-ribosyl)imidazole-4-carboxamide + L-glutamine = D-erythro-1-(imidazol-4-yl)glycerol 3-phosphate + 5-amino-1-(5-phospho-beta-D-ribosyl)imidazole-4-carboxamide + L-glutamate + H(+). The catalysed reaction is L-glutamine + H2O = L-glutamate + NH4(+). It participates in amino-acid biosynthesis; L-histidine biosynthesis; L-histidine from 5-phospho-alpha-D-ribose 1-diphosphate: step 5/9. IGPS catalyzes the conversion of PRFAR and glutamine to IGP, AICAR and glutamate. The HisH subunit catalyzes the hydrolysis of glutamine to glutamate and ammonia as part of the synthesis of IGP and AICAR. The resulting ammonia molecule is channeled to the active site of HisF. This Methanosarcina mazei (strain ATCC BAA-159 / DSM 3647 / Goe1 / Go1 / JCM 11833 / OCM 88) (Methanosarcina frisia) protein is Imidazole glycerol phosphate synthase subunit HisH.